Reading from the N-terminus, the 514-residue chain is MADSGLDKKSTKCPDCSSASQKDVLCVCSSKTRVPPVLVVEMSQTSSIGSAESLISLERKKEKNINRDITSRKDLPSRTSNVERKASQQQWGRGNFTEGKVPHIRIENGAAIEEIYTFGRILGKGSFGIVIEATDKETETKWAIKKVNKEKAGSSAVKLLEREVNILKSVKHEHIIHLEQVFETPKKMYLVMELCEDGELKEILDRKGHFSENETRWIIQSLASAIAYLHNNDIVHRDLKLENIMVKSSLIDDNNEINLNIKVTDFGLAVKKQSRSEAMLQATCGTPIYMAPEVISAHDYSQQCDIWSIGVVMYMLLRGEPPFLASSEEKLFELIRKGELHFENAVWNSISDCAKSVLKQLMKVDPAHRITAKELLDNQWLTGNKLSSVRPTNVLEMMKEWKNNPESVEENTTEEKNKPSTEEKLKSYQPWGNVPDANYTSDEEEEKQSTAYEKQFPATSKDNFDMCSSSFTSSKLLPAEIKGEMEKTPVTPSQGTATKYPAKSGALSRTKKKL.

The span at 65 to 86 shows a compositional bias: basic and acidic residues; the sequence is INRDITSRKDLPSRTSNVERKA. The tract at residues 65–91 is disordered; that stretch reads INRDITSRKDLPSRTSNVERKASQQQW. The Protein kinase domain occupies 116 to 381; that stretch reads YTFGRILGKG…AKELLDNQWL (266 aa). Residues 122 to 130 and K145 each bind ATP; that span reads LGKGSFGIV. D238 functions as the Proton acceptor in the catalytic mechanism. 2 disordered regions span residues 402–468 and 485–514; these read KNNP…DMCS and MEKTPVTPSQGTATKYPAKSGALSRTKKKL. S407 bears the Phosphoserine mark. A compositionally biased stretch (basic and acidic residues) spans 413 to 426; the sequence is TEEKNKPSTEEKLK. A compositionally biased stretch (polar residues) spans 449 to 468; the sequence is STAYEKQFPATSKDNFDMCS.

It belongs to the protein kinase superfamily. CAMK Ser/Thr protein kinase family. CaMK subfamily. As to quaternary structure, homodimer. In terms of processing, autophosphorylated. As to expression, highly expressed in testis, fetal lung and heart, followed by pituitary gland, kidney, interventricular septum, pancreas, heart, trachea, thyroid gland and uterus. Weak hybridization signals were observed in the following tissues: amygdala, aorta, esophagus, colon ascending, colon transverse, skeletal muscle, spleen, peripheral blood leukocyte, lymph node, bone marrow, placenta, prostate, liver, salivary gland, mammary gland, some tumor cell lines, fetal brain, fetal liver, fetal spleen and fetal thymus. No signal at all was detectable in RNA from tissues of the nervous system.

The protein resides in the cytoplasm. The protein localises to the cytoskeleton. It is found in the perinuclear region. The enzyme catalyses L-seryl-[protein] + ATP = O-phospho-L-seryl-[protein] + ADP + H(+). The catalysed reaction is L-threonyl-[protein] + ATP = O-phospho-L-threonyl-[protein] + ADP + H(+). Specifically inhibited by CDD-2807 ((3-([1,1'-Biphenyl]-2-ylethynyl)-1H-indazol-5-yl)(2,6-diazaspiro[3.5]nonan-2-yl)methanone). Functionally, serine/threonine protein kinase required for spermatid differentiation and male fertility. Promotes sperm flagella assembly during spermatogenesis by mediating phosphorylation of fibrous sheath proteins AKAP3 and AKAP4. Also phosphorylates vimentin/VIM, thereby regulating the dynamic behavior of the intermediate filament cytoskeleton. In Homo sapiens (Human), this protein is Serine/threonine-protein kinase 33.